Here is a 131-residue protein sequence, read N- to C-terminus: Large ribosomal subunit protein bL19 (131 aa).

Belongs to the bacterial ribosomal protein bL19 family.

This protein is located at the 30S-50S ribosomal subunit interface and may play a role in the structure and function of the aminoacyl-tRNA binding site. This is Large ribosomal subunit protein bL19 from Anaeromyxobacter dehalogenans (strain 2CP-C).